We begin with the raw amino-acid sequence, 247 residues long: Translation initiation factor IF-3 (247 aa).

2 disordered regions span residues 1–20 (MIRE…TNRR) and 188–247 (LVRQ…PTAS). Residues 182–247 (AQKARELVRQ…AAEAQSPTAS (66 aa)) form a needed for vegetative and developmental functions, but not for viability region. Residues 207–217 (AGKSAAGASSG) are compositionally biased toward low complexity. Residues 218 to 232 (AEEKAEETAEEKKEA) show a composition bias toward basic and acidic residues. Over residues 233–247 (QAAPAAAEAQSPTAS) the composition is skewed to low complexity.

Belongs to the IF-3 family. In terms of assembly, monomer.

The protein localises to the cytoplasm. In terms of biological role, IF-3 binds to the 30S ribosomal subunit and shifts the equilibrium between 70S ribosomes and their 50S and 30S subunits in favor of the free subunits, thus enhancing the availability of 30S subunits on which protein synthesis initiation begins. This chain is Translation initiation factor IF-3, found in Myxococcus xanthus.